Reading from the N-terminus, the 435-residue chain is MNTIEKIRLDPITRIEGEITLPGSKSLSNRALLLAALAKGTTRVTNLLVSDDVEHMLNALQTLGIRYTLSQDKRECIVEGACGALAWQNGLSLFLGNAGTVMRPLAAVLCLKGEVRAEVVLTGEARMQQRPIQHLVDALRQAGANIEYLENQGYPPLAIKNTGLIGGKIQIDGSISSQFLTALLMVAPLAESDMQIEIVGDLVSKPYIDMTLAMMRDFGVVVQNNNYQSFFVQAQQCYLSPGQYWVEGDASSASYFLAAAAIKGKVKVNGIGKNSIQGDRLFADVLAKMGANISWGEDFIQAEKSVLRGIDVDLNHIPDAAITIAIVALFAETETIIRNVYNWRVKETDRLSAMATELRKLGATVEEGQDFIRIQPLALTDFETAEIETYNDHRIAMCFSLIALSNTAVTILDPQCTRKTFPNYFAEFEKLWRKN.

3-phosphoshikimate is bound by residues K25, S26, and R30. Residue K25 participates in phosphoenolpyruvate binding. 2 residues coordinate phosphoenolpyruvate: G99 and R130. Residues S176, S177, Q178, S204, D319, N342, and K346 each contribute to the 3-phosphoshikimate site. Q178 contacts phosphoenolpyruvate. The active-site Proton acceptor is the D319. The phosphoenolpyruvate site is built by R350, R394, and K419.

It belongs to the EPSP synthase family. Monomer.

The protein localises to the cytoplasm. It catalyses the reaction 3-phosphoshikimate + phosphoenolpyruvate = 5-O-(1-carboxyvinyl)-3-phosphoshikimate + phosphate. Its pathway is metabolic intermediate biosynthesis; chorismate biosynthesis; chorismate from D-erythrose 4-phosphate and phosphoenolpyruvate: step 6/7. Its function is as follows. Catalyzes the transfer of the enolpyruvyl moiety of phosphoenolpyruvate (PEP) to the 5-hydroxyl of shikimate-3-phosphate (S3P) to produce enolpyruvyl shikimate-3-phosphate and inorganic phosphate. The sequence is that of 3-phosphoshikimate 1-carboxyvinyltransferase from Haemophilus ducreyi (strain 35000HP / ATCC 700724).